The following is a 385-amino-acid chain: tRNA-specific 2-thiouridylase MnmA (385 aa).

ATP is bound by residues Ala27 to Ser34 and Leu53. The active-site Nucleophile is Cys121. Residues Cys121 and Cys217 are joined by a disulfide bond. Gly145 serves as a coordination point for ATP. An interaction with tRNA region spans residues Lys167–Gln169. Cys217 acts as the Cysteine persulfide intermediate in catalysis.

This sequence belongs to the MnmA/TRMU family.

Its subcellular location is the cytoplasm. It carries out the reaction S-sulfanyl-L-cysteinyl-[protein] + uridine(34) in tRNA + AH2 + ATP = 2-thiouridine(34) in tRNA + L-cysteinyl-[protein] + A + AMP + diphosphate + H(+). Its function is as follows. Catalyzes the 2-thiolation of uridine at the wobble position (U34) of tRNA, leading to the formation of s(2)U34. The chain is tRNA-specific 2-thiouridylase MnmA from Sorangium cellulosum (strain So ce56) (Polyangium cellulosum (strain So ce56)).